The primary structure comprises 335 residues: Beta-hexosaminidase (335 aa).

Residues Asp-60, Arg-68, Arg-133, and 163–164 each bind substrate; that span reads KH. His-176 functions as the Proton donor/acceptor in the catalytic mechanism. Asp-247 (nucleophile) is an active-site residue.

This sequence belongs to the glycosyl hydrolase 3 family. NagZ subfamily.

The protein resides in the cytoplasm. It catalyses the reaction Hydrolysis of terminal non-reducing N-acetyl-D-hexosamine residues in N-acetyl-beta-D-hexosaminides.. It functions in the pathway cell wall biogenesis; peptidoglycan recycling. Plays a role in peptidoglycan recycling by cleaving the terminal beta-1,4-linked N-acetylglucosamine (GlcNAc) from peptide-linked peptidoglycan fragments, giving rise to free GlcNAc, anhydro-N-acetylmuramic acid and anhydro-N-acetylmuramic acid-linked peptides. This Xylella fastidiosa (strain M12) protein is Beta-hexosaminidase.